Consider the following 64-residue polypeptide: MPKMKTNRGASKRFKVKKNLIKRGSAFKSHILTKKSPKRKANLNAPKHVHHTNAHSVMSLLCRA.

Residues 38–53 (KRKANLNAPKHVHHTN) show a composition bias toward basic residues. Residues 38-64 (KRKANLNAPKHVHHTNAHSVMSLLCRA) are disordered.

The protein belongs to the bacterial ribosomal protein bL35 family.

This is Large ribosomal subunit protein bL35 from Helicobacter pylori (strain G27).